The chain runs to 129 residues: MESKVEQGVKNLNMENDHQEKEEKEEKPQDANKREPVVALPFEAGEYYVPRGSRRRFRVRQPIAHYRWDLMHRVGEPQGRMREENVQRFGEDMRQLMEKLRERQLSHSLRAVSTDPPHHDHHDEFCLMP.

Residues 1–38 are disordered; it reads MESKVEQGVKNLNMENDHQEKEEKEEKPQDANKREPVV. Basic and acidic residues predominate over residues 15 to 36; that stretch reads ENDHQEKEEKEEKPQDANKREP. The residue at position 51 (arginine 51) is an Omega-N-methylarginine. Residues 108 to 129 are disordered; it reads SLRAVSTDPPHHDHHDEFCLMP. Residues 116 to 129 are compositionally biased toward basic and acidic residues; sequence PPHHDHHDEFCLMP. The his cluster stretch occupies residues 118–122; sequence HHDHH. Cysteine 126 contributes to the Zn(2+) binding site.

The protein belongs to the BEX family. In terms of assembly, interacts with LMO2, possibly leading to regulate the transcriptional activity of a DNA-binding complex containing LMO2. Interacts with OMP.

The protein resides in the nucleus. It localises to the cytoplasm. Regulator of mitochondrial apoptosis and G1 cell cycle. Regulates the level of PP2A regulatory subunit B and PP2A phosphatase activity. In absence of reductive stress, acts as a pseudosubstrate for the CRL2(FEM1B) complex: associates with FEM1B via zinc, thereby preventing association between FEM1B and its substrates. In Rattus norvegicus (Rat), this protein is Protein BEX2 (Bex2).